The primary structure comprises 756 residues: Ent-kaurene synthase, chloroplastic (756 aa).

Asp-507 and Asp-511 together coordinate Mg(2+). A DDXXD motif motif is present at residues 507–511 (DDFFD). The chain crosses the membrane as a helical span at residues 606 to 622 (YVSFALGPIVLPCLYLV). 3 residues coordinate Mg(2+): Asn-651, Thr-655, and Glu-659.

It belongs to the terpene synthase family. Mg(2+) is required as a cofactor. In terms of tissue distribution, present in both leaves and flowers.

It is found in the plastid. It localises to the chloroplast membrane. The enzyme catalyses ent-copalyl diphosphate = ent-kaur-16-ene + diphosphate. Its pathway is plant hormone biosynthesis; gibberellin biosynthesis. In terms of biological role, involved in the biosynthesis of labdane-type diterpenoid including marrubiin and other labdane-related furanoid diterpenoids with potential applications as anti-diabetics, analgesics or vasorelaxants. Terpene synthase that produces ent-kaurene from ent-copalyl diphosphate (ent-CPP). The protein is Ent-kaurene synthase, chloroplastic of Marrubium vulgare (White horehound).